A 523-amino-acid polypeptide reads, in one-letter code: MNTFPLFFKLEDRKVLIVGGGDVALRKADLLSRAGACITVLAPSISHEIQALLSDSKHALIYENYNKTYMTDSRVIIAATDDETLNHQIHSDATALNIPVNVVDTPHLCDFIFPAIVDRNPIVIGISSNGKAPVLARLLRARLETLIPQGYGKLAKLAGEFRGDVKAKIPTLTGRRQFWEQVFEGKVSQLMFSGNENEAIAQLQADLDNTAANITAKNATDESTEAQNTMGEVYIVGAGPGDPELLTFKALRLMQQADIVYYDALVSPQVLDLCRRDADKVFVGKKRSNHAVAQLGINELLVNSAKEGRRVVRLKGGDPFIFGRGGEEIESLRSHNVPYQVVPGITAANAAASYAGIPLTHRDHSQSVRFVTGFLKAGAPNNNFKSFLNTDETVVFYMGLHSLPRLTQGLIDAGRSAKTPIAIVSNASMPNQQVLTGTLASIVELQAQHQLPTPALLIMGDVVSLHHDLAWYNNKKTSENDNNWLRGGTATTPKPNPNQQAHALSMIANLATEDGGLEQLVID.

The tract at residues 1-203 is precorrin-2 dehydrogenase /sirohydrochlorin ferrochelatase; it reads MNTFPLFFKL…GNENEAIAQL (203 aa). NAD(+) contacts are provided by residues 22–23 and 43–44; these read DV and PS. The residue at position 128 (S128) is a Phosphoserine. Residues 231–523 form a uroporphyrinogen-III C-methyltransferase region; the sequence is GEVYIVGAGP…DGGLEQLVID (293 aa). P240 provides a ligand contact to S-adenosyl-L-methionine. The active-site Proton acceptor is the D263. The Proton donor role is filled by K285. Residues 316–318, I321, 346–347, M398, and A427 each bind S-adenosyl-L-methionine; these read GGD and TA.

This sequence in the N-terminal section; belongs to the precorrin-2 dehydrogenase / sirohydrochlorin ferrochelatase family. In the C-terminal section; belongs to the precorrin methyltransferase family.

It catalyses the reaction uroporphyrinogen III + 2 S-adenosyl-L-methionine = precorrin-2 + 2 S-adenosyl-L-homocysteine + H(+). The enzyme catalyses precorrin-2 + NAD(+) = sirohydrochlorin + NADH + 2 H(+). The catalysed reaction is siroheme + 2 H(+) = sirohydrochlorin + Fe(2+). It participates in cofactor biosynthesis; adenosylcobalamin biosynthesis; precorrin-2 from uroporphyrinogen III: step 1/1. The protein operates within cofactor biosynthesis; adenosylcobalamin biosynthesis; sirohydrochlorin from precorrin-2: step 1/1. Its pathway is porphyrin-containing compound metabolism; siroheme biosynthesis; precorrin-2 from uroporphyrinogen III: step 1/1. It functions in the pathway porphyrin-containing compound metabolism; siroheme biosynthesis; siroheme from sirohydrochlorin: step 1/1. It participates in porphyrin-containing compound metabolism; siroheme biosynthesis; sirohydrochlorin from precorrin-2: step 1/1. In terms of biological role, multifunctional enzyme that catalyzes the SAM-dependent methylations of uroporphyrinogen III at position C-2 and C-7 to form precorrin-2 via precorrin-1. Then it catalyzes the NAD-dependent ring dehydrogenation of precorrin-2 to yield sirohydrochlorin. Finally, it catalyzes the ferrochelation of sirohydrochlorin to yield siroheme. The sequence is that of Siroheme synthase from Psychrobacter cryohalolentis (strain ATCC BAA-1226 / DSM 17306 / VKM B-2378 / K5).